Reading from the N-terminus, the 529-residue chain is Beta-galactoside alpha-2,6-sialyltransferase 2 (529 aa).

Topologically, residues 1 to 11 (MKPHLKQWRQR) are cytoplasmic. Residues 12 to 32 (MLFGLFAGGLLFLLIFIYFTD) traverse the membrane as a helical; Signal-anchor for type II membrane protein segment. Topologically, residues 33 to 529 (SNPAEPVPSS…PAPSPVIPHS (497 aa)) are lumenal. The segment at 142–186 (SHSQGTLGFPSPGEPGPREGAFPAAQVQRRRVKKRHRRQRRSHVL) is disordered. Over residues 169 to 183 (QRRRVKKRHRRQRRS) the composition is skewed to basic residues. The N-linked (GlcNAc...) asparagine glycan is linked to asparagine 211. 3 disulfides stabilise this stretch: cysteine 253/cysteine 519, cysteine 296/cysteine 448, and cysteine 466/cysteine 477.

This sequence belongs to the glycosyltransferase 29 family.

The protein resides in the golgi apparatus. The protein localises to the golgi stack membrane. The enzyme catalyses a beta-D-galactoside + CMP-N-acetyl-beta-neuraminate = an N-acetyl-alpha-neuraminyl-(2-&gt;6)-beta-D-galactosyl derivative + CMP + H(+). In terms of biological role, transfers sialic acid from the donor of substrate CMP-sialic acid to galactose containing acceptor substrates. Has alpha-2,6-sialyltransferase activity toward oligosaccharides that have the Gal-beta-1,4-GlcNAc sequence at the non-reducing end of their carbohydrate groups, but it has weak or no activities toward glycoproteins and glycolipids. The polypeptide is Beta-galactoside alpha-2,6-sialyltransferase 2 (ST6GAL2) (Pan troglodytes (Chimpanzee)).